The primary structure comprises 785 residues: DNA ligase (785 aa).

NAD(+) is bound by residues 32-36 (DAEYD), 81-82 (SL), and E121. Catalysis depends on K123, which acts as the N6-AMP-lysine intermediate. R144, E181, K294, and K318 together coordinate NAD(+). Zn(2+) contacts are provided by C412, C415, C442, and C448. In terms of domain architecture, BRCT spans 702–785 (VEGLPEAGHT…AFLAKHNIPV (84 aa)).

This sequence belongs to the NAD-dependent DNA ligase family. LigA subfamily. Requires Mg(2+) as cofactor. Mn(2+) serves as cofactor.

It catalyses the reaction NAD(+) + (deoxyribonucleotide)n-3'-hydroxyl + 5'-phospho-(deoxyribonucleotide)m = (deoxyribonucleotide)n+m + AMP + beta-nicotinamide D-nucleotide.. DNA ligase that catalyzes the formation of phosphodiester linkages between 5'-phosphoryl and 3'-hydroxyl groups in double-stranded DNA using NAD as a coenzyme and as the energy source for the reaction. It is essential for DNA replication and repair of damaged DNA. The polypeptide is DNA ligase (Pseudomonas fluorescens (strain SBW25)).